The primary structure comprises 402 residues: Arginine deiminase (402 aa).

Catalysis depends on cysteine 392, which acts as the Amidino-cysteine intermediate.

It belongs to the arginine deiminase family.

Its subcellular location is the cytoplasm. The catalysed reaction is L-arginine + H2O = L-citrulline + NH4(+). It functions in the pathway amino-acid degradation; L-arginine degradation via ADI pathway; carbamoyl phosphate from L-arginine: step 1/2. The protein is Arginine deiminase of Mycobacterium avium (strain 104).